The chain runs to 382 residues: MKITHITTYRLPPRWMFLKIETDEGVVGWGEPVIEGRARTVEAAVHEFADYLIGKDPARINDLWQVMYRAGFYRGGPIMMSAIAGIDQALWDIKGKVLNAPVWQLMGGLVRDKIKAYSWVGGDRPADVIDGIEKLRGIGFDTFKLNGCEEMGVIDNSRAVDAAVNTVAQIREAFGSEIEFGLDFHGRVSAPMAKVLIKELEPYRPLFIEEPVLAEQAEYYPRLAAQTHIPIAAGERMFSRFEFKRVLDAGGLAILQPDLSHAGGITECYKIAGMAEAYDVALAPHCPLGPIALAACLHIDFVSRNAVFQEQSMGIHYNKGAELLDFVKNKEDFSMDGGFFKPLTKPGLGVDIDEARVIELSKSAPDWRNPLWRHADGSVAEW.

Mg(2+) is bound at residue D183. H185 serves as the catalytic Proton donor. E209 and E235 together coordinate Mg(2+). H285 acts as the Proton acceptor in catalysis.

It belongs to the mandelate racemase/muconate lactonizing enzyme family. GalD subfamily. Requires Mg(2+) as cofactor.

It catalyses the reaction D-galactonate = 2-dehydro-3-deoxy-D-galactonate + H2O. The protein operates within carbohydrate acid metabolism; D-galactonate degradation; D-glyceraldehyde 3-phosphate and pyruvate from D-galactonate: step 1/3. Catalyzes the dehydration of D-galactonate to 2-keto-3-deoxy-D-galactonate. The sequence is that of D-galactonate dehydratase from Salmonella dublin (strain CT_02021853).